Consider the following 209-residue polypeptide: Ribonuclease HII (209 aa).

Residues 19-209 (CTIVGVDEVG…ASGITKLYNK (191 aa)) form the RNase H type-2 domain. Residues D25, E26, and D118 each coordinate a divalent metal cation.

Belongs to the RNase HII family. It depends on Mn(2+) as a cofactor. The cofactor is Mg(2+).

The protein localises to the cytoplasm. It catalyses the reaction Endonucleolytic cleavage to 5'-phosphomonoester.. In terms of biological role, endonuclease that specifically degrades the RNA of RNA-DNA hybrids. This Ehrlichia chaffeensis (strain ATCC CRL-10679 / Arkansas) protein is Ribonuclease HII.